A 121-amino-acid polypeptide reads, in one-letter code: Small ribosomal subunit protein uS13 (121 aa).

The tract at residues 92 to 121 is disordered; that stretch reads RKGLPMRGQRTRTNARTRKGPRRAAQALKK.

This sequence belongs to the universal ribosomal protein uS13 family. As to quaternary structure, part of the 30S ribosomal subunit. Forms a loose heterodimer with protein S19. Forms two bridges to the 50S subunit in the 70S ribosome.

In terms of biological role, located at the top of the head of the 30S subunit, it contacts several helices of the 16S rRNA. In the 70S ribosome it contacts the 23S rRNA (bridge B1a) and protein L5 of the 50S subunit (bridge B1b), connecting the 2 subunits; these bridges are implicated in subunit movement. Contacts the tRNAs in the A and P-sites. This chain is Small ribosomal subunit protein uS13, found in Burkholderia thailandensis (strain ATCC 700388 / DSM 13276 / CCUG 48851 / CIP 106301 / E264).